The sequence spans 510 residues: Bifunctional purine biosynthesis protein PurH (510 aa).

Residues 1–142 (MRALLSVSDK…KNYKDVMVLC (142 aa)) form the MGS-like domain.

The protein belongs to the PurH family.

It carries out the reaction (6R)-10-formyltetrahydrofolate + 5-amino-1-(5-phospho-beta-D-ribosyl)imidazole-4-carboxamide = 5-formamido-1-(5-phospho-D-ribosyl)imidazole-4-carboxamide + (6S)-5,6,7,8-tetrahydrofolate. It catalyses the reaction IMP + H2O = 5-formamido-1-(5-phospho-D-ribosyl)imidazole-4-carboxamide. It participates in purine metabolism; IMP biosynthesis via de novo pathway; 5-formamido-1-(5-phospho-D-ribosyl)imidazole-4-carboxamide from 5-amino-1-(5-phospho-D-ribosyl)imidazole-4-carboxamide (10-formyl THF route): step 1/1. It functions in the pathway purine metabolism; IMP biosynthesis via de novo pathway; IMP from 5-formamido-1-(5-phospho-D-ribosyl)imidazole-4-carboxamide: step 1/1. The sequence is that of Bifunctional purine biosynthesis protein PurH from Campylobacter jejuni subsp. jejuni serotype O:2 (strain ATCC 700819 / NCTC 11168).